Consider the following 258-residue polypeptide: 3-deoxy-manno-octulosonate cytidylyltransferase (258 aa).

This sequence belongs to the KdsB family.

The protein localises to the cytoplasm. It catalyses the reaction 3-deoxy-alpha-D-manno-oct-2-ulosonate + CTP = CMP-3-deoxy-beta-D-manno-octulosonate + diphosphate. It functions in the pathway nucleotide-sugar biosynthesis; CMP-3-deoxy-D-manno-octulosonate biosynthesis; CMP-3-deoxy-D-manno-octulosonate from 3-deoxy-D-manno-octulosonate and CTP: step 1/1. The protein operates within bacterial outer membrane biogenesis; lipopolysaccharide biosynthesis. Functionally, activates KDO (a required 8-carbon sugar) for incorporation into bacterial lipopolysaccharide in Gram-negative bacteria. The sequence is that of 3-deoxy-manno-octulosonate cytidylyltransferase from Nitrobacter hamburgensis (strain DSM 10229 / NCIMB 13809 / X14).